The sequence spans 341 residues: D-erythrose-4-phosphate dehydrogenase (341 aa).

Residue 12–13 (RI) participates in NAD(+) binding. Residues 154–156 (SCT), Arg200, 213–214 (TK), and Arg236 each bind substrate. Residue Cys155 is the Nucleophile of the active site. Residue Asn318 participates in NAD(+) binding.

The protein belongs to the glyceraldehyde-3-phosphate dehydrogenase family. Epd subfamily. Homotetramer.

It is found in the cytoplasm. It carries out the reaction D-erythrose 4-phosphate + NAD(+) + H2O = 4-phospho-D-erythronate + NADH + 2 H(+). The protein operates within cofactor biosynthesis; pyridoxine 5'-phosphate biosynthesis; pyridoxine 5'-phosphate from D-erythrose 4-phosphate: step 1/5. Its function is as follows. Catalyzes the NAD-dependent conversion of D-erythrose 4-phosphate to 4-phosphoerythronate. The sequence is that of D-erythrose-4-phosphate dehydrogenase from Edwardsiella ictaluri (strain 93-146).